We begin with the raw amino-acid sequence, 554 residues long: Methyl-CpG-binding domain protein 4 (554 aa).

Residues 1–23 (MESPNLGDNRVRGESLVPDPPWD) are disordered. The 73-residue stretch at 63–135 (STTATEGHKP…EDFNFTVLPK (73 aa)) folds into the MBD domain. Residues 154 to 164 (QPNETDVSKQN) are compositionally biased toward polar residues. 2 disordered regions span residues 154–195 (QPNE…SNSN) and 209–252 (DVDS…RKRA). A compositionally biased stretch (low complexity) spans 178-195 (LPSGTSESPESSGLSNSN). Ser296 and Ser402 each carry phosphoserine. Asp534 is a catalytic residue.

As to quaternary structure, interacts with MLH1.

It is found in the nucleus. Its function is as follows. Mismatch-specific DNA N-glycosylase involved in DNA repair. Has thymine glycosylase activity and is specific for G:T mismatches within methylated and unmethylated CpG sites. Can also remove uracil or 5-fluorouracil in G:U mismatches. Has no lyase activity. Was first identified as methyl-CpG-binding protein. This Mus musculus (Mouse) protein is Methyl-CpG-binding domain protein 4 (Mbd4).